The primary structure comprises 72 residues: Translation initiation factor IF-1 (72 aa).

An S1-like domain is found at 1-72 (MAKDDVIEVE…TRGRITYRYK (72 aa)). The residue at position 60 (Tyr60) is a Phosphotyrosine.

It belongs to the IF-1 family. In terms of assembly, component of the 30S ribosomal translation pre-initiation complex which assembles on the 30S ribosome in the order IF-2 and IF-3, IF-1 and N-formylmethionyl-tRNA(fMet); mRNA recruitment can occur at any time during PIC assembly.

It is found in the cytoplasm. One of the essential components for the initiation of protein synthesis. Stabilizes the binding of IF-2 and IF-3 on the 30S subunit to which N-formylmethionyl-tRNA(fMet) subsequently binds. Helps modulate mRNA selection, yielding the 30S pre-initiation complex (PIC). Upon addition of the 50S ribosomal subunit IF-1, IF-2 and IF-3 are released leaving the mature 70S translation initiation complex. The protein is Translation initiation factor IF-1 of Bacillus pumilus (strain SAFR-032).